A 224-amino-acid polypeptide reads, in one-letter code: Phosphoribosylformylglycinamidine synthase subunit PurQ (224 aa).

Residues 4–224 (RIGVVTFPGT…YSALDAVLTG (221 aa)) form the Glutamine amidotransferase type-1 domain. The active-site Nucleophile is the cysteine 87. Residues histidine 195 and glutamate 197 contribute to the active site.

Part of the FGAM synthase complex composed of 1 PurL, 1 PurQ and 2 PurS subunits.

It is found in the cytoplasm. The enzyme catalyses N(2)-formyl-N(1)-(5-phospho-beta-D-ribosyl)glycinamide + L-glutamine + ATP + H2O = 2-formamido-N(1)-(5-O-phospho-beta-D-ribosyl)acetamidine + L-glutamate + ADP + phosphate + H(+). The catalysed reaction is L-glutamine + H2O = L-glutamate + NH4(+). It participates in purine metabolism; IMP biosynthesis via de novo pathway; 5-amino-1-(5-phospho-D-ribosyl)imidazole from N(2)-formyl-N(1)-(5-phospho-D-ribosyl)glycinamide: step 1/2. Functionally, part of the phosphoribosylformylglycinamidine synthase complex involved in the purines biosynthetic pathway. Catalyzes the ATP-dependent conversion of formylglycinamide ribonucleotide (FGAR) and glutamine to yield formylglycinamidine ribonucleotide (FGAM) and glutamate. The FGAM synthase complex is composed of three subunits. PurQ produces an ammonia molecule by converting glutamine to glutamate. PurL transfers the ammonia molecule to FGAR to form FGAM in an ATP-dependent manner. PurS interacts with PurQ and PurL and is thought to assist in the transfer of the ammonia molecule from PurQ to PurL. In Mycobacterium bovis (strain ATCC BAA-935 / AF2122/97), this protein is Phosphoribosylformylglycinamidine synthase subunit PurQ.